We begin with the raw amino-acid sequence, 71 residues long: MVNVLKGVLIECDPAMKQFLLYLDESNALGKKFIIQDIDDTHVFVIAELVNVLQERVGELMDQNAFSLTQK.

Residue T69 is modified to Phosphothreonine.

It belongs to the TFB5 family. As to quaternary structure, component of the 7-subunit TFIIH core complex composed of XPB/ERCC3, XPD/ERCC2, GTF2H1, GTF2H2, GTF2H3, GTF2H4 and GTF2H5, which is active in NER. The core complex associates with the 3-subunit CDK-activating kinase (CAK) module composed of CCNH/cyclin H, CDK7 and MNAT1 to form the 10-subunit holoenzyme (holo-TFIIH) active in transcription. Part of TBP-based Pol II pre-initiation complex (PIC), in which Pol II core assembles with general transcription factors and other specific initiation factors including GTF2E1, GTF2E2, GTF2F1, GTF2F2, TCEA1, ERCC2, ERCC3, GTF2H2, GTF2H3, GTF2H4, GTF2H5, GTF2A1, GTF2A2, GTF2B and TBP; this large multi-subunit PIC complex mediates DNA unwinding and targets Pol II core to the transcription start site where the first phosphodiester bond forms.

The protein resides in the nucleus. It localises to the cytoplasm. Component of the general transcription and DNA repair factor IIH (TFIIH) core complex, which is involved in general and transcription-coupled nucleotide excision repair (NER) of damaged DNA and, when complexed to CAK, in RNA transcription by RNA polymerase II. In NER, TFIIH acts by opening DNA around the lesion to allow the excision of the damaged oligonucleotide and its replacement by a new DNA fragment. In transcription, TFIIH has an essential role in transcription initiation. When the pre-initiation complex (PIC) has been established, TFIIH is required for promoter opening and promoter escape. Phosphorylation of the C-terminal tail (CTD) of the largest subunit of RNA polymerase II by the kinase module CAK controls the initiation of transcription. Necessary for the stability of the TFIIH complex and for the presence of normal levels of TFIIH in the cell. This chain is General transcription factor IIH subunit 5, found in Homo sapiens (Human).